A 212-amino-acid chain; its full sequence is Uracil phosphoribosyltransferase (212 aa).

5-phospho-alpha-D-ribose 1-diphosphate-binding positions include Arg78, Arg103, and 130-138 (DPMLATGGS). Uracil-binding positions include Ile193 and 198–200 (GDA). Position 199 (Asp199) interacts with 5-phospho-alpha-D-ribose 1-diphosphate.

The protein belongs to the UPRTase family. Mg(2+) serves as cofactor.

It catalyses the reaction UMP + diphosphate = 5-phospho-alpha-D-ribose 1-diphosphate + uracil. It functions in the pathway pyrimidine metabolism; UMP biosynthesis via salvage pathway; UMP from uracil: step 1/1. Its activity is regulated as follows. Allosterically activated by GTP. Catalyzes the conversion of uracil and 5-phospho-alpha-D-ribose 1-diphosphate (PRPP) to UMP and diphosphate. In Pseudomonas putida (strain ATCC 700007 / DSM 6899 / JCM 31910 / BCRC 17059 / LMG 24140 / F1), this protein is Uracil phosphoribosyltransferase.